The following is a 328-amino-acid chain: MAMNYSAKDEVDGGPTGPPGGAAKTRRPDNTAFKQQRLPAWQPILTAGTVLPTFFIIGLIFIPIGIGIFVTSNNIREIEGNVFMYYGLSNFYQNHRRYVKSRDDSQLNGDPSALLNPSKECEPYRRNEDKPIAPCGAIANSMFNDTLELFLVANESDPKPVPILLKKKGIAWWTDKNVKFRNPPGKDSLQEKFKDTTKPVNWHKPVYELDPDDESNNGFINEDFIVWMRTAALPTFRKLYRLIERTDDLHPTLPAGQYYLNITYNYPVHFFDGRKRMILSTISWMGGKNPFLGIAYITIGSISFLLGVVLLVINHKYRNSSNTADITI.

The interval 1–28 (MAMNYSAKDEVDGGPTGPPGGAAKTRRP) is disordered. Alanine 2 bears the N-acetylalanine mark. The segment at 2 to 48 (AMNYSAKDEVDGGPTGPPGGAAKTRRPDNTAFKQQRLPAWQPILTAG) is required for ATPase and aminophospholipid flippase activity. Topologically, residues 2–49 (AMNYSAKDEVDGGPTGPPGGAAKTRRPDNTAFKQQRLPAWQPILTAGT) are cytoplasmic. An interaction with ATP8A2 region spans residues 49–315 (TVLPTFFIIG…LGVVLLVINH (267 aa)). Residues 50–70 (VLPTFFIIGLIFIPIGIGIFV) traverse the membrane as a helical segment. Topologically, residues 71 to 292 (TSNNIREIEG…SWMGGKNPFL (222 aa)) are exoplasmic loop. The segment at 102 to 125 (RDDSQLNGDPSALLNPSKECEPYR) is disordered. Residues cysteine 121 and cysteine 135 are joined by a disulfide bond. Residues asparagine 144 and asparagine 261 are each glycosylated (N-linked (GlcNAc...) asparagine). Residues 293-313 (GIAYITIGSISFLLGVVLLVI) traverse the membrane as a helical segment. Topologically, residues 314 to 328 (NHKYRNSSNTADITI) are cytoplasmic.

Belongs to the CDC50/LEM3 family. Component of various P4-ATPase flippase complexes which consists of a catalytic alpha subunit and an accessory beta subunit. Interacts with ATP8A1 to form a flippase complex; this complex forms an intermediate phosphoenzyme. Interacts with ATP8A2 to form a flippase complex. TP8B1:TMEM30A and ATP8B2:TMEM30A flippase complexes have been shown to form intermediate phosphoenzymes in vitro. Interacts with alpha subunits ATP8A1, ATP8B1, ATP8B2, ATP8B4, ATP10A, ATP10B, ATP10D, ATP11A, ATP11B and ATP11C. N-glycosylated. Contains high mannose-type oligosaccharides.

It is found in the membrane. The protein localises to the golgi apparatus. It localises to the cytoplasmic vesicle. The protein resides in the secretory vesicle membrane. Its subcellular location is the apical cell membrane. It is found in the photoreceptor inner segment. The protein localises to the cell projection. It localises to the cilium. The protein resides in the photoreceptor outer segment. Functionally, accessory component of a P4-ATPase flippase complex which catalyzes the hydrolysis of ATP coupled to the transport of aminophospholipids from the outer to the inner leaflet of various membranes and ensures the maintenance of asymmetric distribution of phospholipids. Phospholipid translocation also seems to be implicated in vesicle formation and in uptake of lipid signaling molecules. The beta subunit may assist in binding of the phospholipid substrate. Required for the proper folding, assembly and ER to Golgi exit of the ATP8A2:TMEM30A flippase complex. ATP8A2:TMEM30A may be involved in regulation of neurite outgrowth, and, reconstituted to liposomes, predomiminantly transports phosphatidylserine (PS) and to a lesser extent phosphatidylethanolamine (PE). The ATP8A1:TMEM30A flippase complex seems to play a role in regulation of cell migration probably involving flippase-mediated translocation of phosphatidylethanolamine (PE) at the plasma membrane. Required for the formation of the ATP8A2, ATP8B1 and ATP8B2 P-type ATPAse intermediate phosphoenzymes. Involved in uptake of platelet-activating factor (PAF). Can also mediate the export of alpha subunits ATP8A1, ATP8B1, ATP8B2, ATP8B4, ATP10A, ATP10B, ATP10D, ATP11A, ATP11B and ATP11C from ER to other membrane localizations. The polypeptide is Cell cycle control protein 50A (Rattus norvegicus (Rat)).